The primary structure comprises 359 residues: UDP-3-O-acylglucosamine N-acyltransferase (359 aa).

H248 serves as the catalytic Proton acceptor.

The protein belongs to the transferase hexapeptide repeat family. LpxD subfamily. In terms of assembly, homotrimer.

It carries out the reaction a UDP-3-O-[(3R)-3-hydroxyacyl]-alpha-D-glucosamine + a (3R)-hydroxyacyl-[ACP] = a UDP-2-N,3-O-bis[(3R)-3-hydroxyacyl]-alpha-D-glucosamine + holo-[ACP] + H(+). The protein operates within bacterial outer membrane biogenesis; LPS lipid A biosynthesis. Its function is as follows. Catalyzes the N-acylation of UDP-3-O-acylglucosamine using 3-hydroxyacyl-ACP as the acyl donor. Is involved in the biosynthesis of lipid A, a phosphorylated glycolipid that anchors the lipopolysaccharide to the outer membrane of the cell. This Chlamydia abortus (strain DSM 27085 / S26/3) (Chlamydophila abortus) protein is UDP-3-O-acylglucosamine N-acyltransferase.